The sequence spans 390 residues: MCNNEAKMSELLSVQSDAPAKKINLMDLTRQQMREFFKELGEKPFRADQLVKWIYHFGEDNFDNMTNINKKLREKLKAVAEIKAPEVAVEQRSADGTIKWAMQVGEQQVETVYIPEADRATLCVSSQVGCALACTFCSTAQQGFNRNLTVSEIIGQVWRASKIIGNFGVTGVRPITNVVMMGMGEPLLNVANVVPAMEIMLDDFAYGLSKRRVTLSTSGVVPALDNLSKMIDVALAISLHAPNDELRDEIVPINKKYNIKTLIDSVNRYLNVSNANHGKVTIEYVMLDHVNDGIEHAHQLAEVLKNTPCKINLIPWNPFPEAPYAKSSNTRIDRFQKTLMEYGFTVIIRKTRGDDIDAACGQLAGDVIDRTKRTAMKRQFGQNIGVTEVN.

The Proton acceptor role is filled by glutamate 110. The 240-residue stretch at glutamate 116 to aspartate 355 folds into the Radical SAM core domain. Cysteines 123 and 360 form a disulfide. 3 residues coordinate [4Fe-4S] cluster: cysteine 130, cysteine 134, and cysteine 137. Residues glycine 184–glutamate 185, serine 216, serine 238–histidine 240, and asparagine 317 each bind S-adenosyl-L-methionine. The active-site S-methylcysteine intermediate is cysteine 360.

Belongs to the radical SAM superfamily. RlmN family. The cofactor is [4Fe-4S] cluster.

The protein localises to the cytoplasm. The catalysed reaction is adenosine(2503) in 23S rRNA + 2 reduced [2Fe-2S]-[ferredoxin] + 2 S-adenosyl-L-methionine = 2-methyladenosine(2503) in 23S rRNA + 5'-deoxyadenosine + L-methionine + 2 oxidized [2Fe-2S]-[ferredoxin] + S-adenosyl-L-homocysteine. The enzyme catalyses adenosine(37) in tRNA + 2 reduced [2Fe-2S]-[ferredoxin] + 2 S-adenosyl-L-methionine = 2-methyladenosine(37) in tRNA + 5'-deoxyadenosine + L-methionine + 2 oxidized [2Fe-2S]-[ferredoxin] + S-adenosyl-L-homocysteine. Its function is as follows. Specifically methylates position 2 of adenine 2503 in 23S rRNA and position 2 of adenine 37 in tRNAs. m2A2503 modification seems to play a crucial role in the proofreading step occurring at the peptidyl transferase center and thus would serve to optimize ribosomal fidelity. This is Dual-specificity RNA methyltransferase RlmN from Haemophilus influenzae (strain 86-028NP).